A 689-amino-acid polypeptide reads, in one-letter code: Glycine--tRNA ligase beta subunit (689 aa).

Belongs to the class-II aminoacyl-tRNA synthetase family. Tetramer of two alpha and two beta subunits.

The protein resides in the cytoplasm. The catalysed reaction is tRNA(Gly) + glycine + ATP = glycyl-tRNA(Gly) + AMP + diphosphate. The polypeptide is Glycine--tRNA ligase beta subunit (Actinobacillus pleuropneumoniae serotype 5b (strain L20)).